The following is a 278-amino-acid chain: Multidrug-efflux transporter 1 regulator (278 aa).

In terms of domain architecture, HTH merR-type spans 5 to 75 (YYSIGEVSKL…LEEMKKAQDL (71 aa)). A DNA-binding region (H-T-H motif) is located at residues 8-27 (IGEVSKLANVSIKALRYYDK).

In terms of assembly, binds DNA as a homodimer.

In terms of biological role, activates transcription of the bmr gene in response to structurally dissimilar drugs. Binds rhodamine as an inducer. This is Multidrug-efflux transporter 1 regulator (bmrR) from Bacillus subtilis (strain 168).